The following is a 236-amino-acid chain: Large ribosomal subunit protein uL1 (236 aa).

This sequence belongs to the universal ribosomal protein uL1 family. Part of the 50S ribosomal subunit.

Its function is as follows. Binds directly to 23S rRNA. The L1 stalk is quite mobile in the ribosome, and is involved in E site tRNA release. In terms of biological role, protein L1 is also a translational repressor protein, it controls the translation of the L11 operon by binding to its mRNA. The chain is Large ribosomal subunit protein uL1 from Corynebacterium glutamicum (strain R).